Reading from the N-terminus, the 257-residue chain is 3-dehydroquinate dehydratase (257 aa).

3-dehydroquinate contacts are provided by residues 50 to 52 (EWR) and Arg-86. Catalysis depends on His-147, which acts as the Proton donor/acceptor. Lys-174 functions as the Schiff-base intermediate with substrate in the catalytic mechanism. Residues Arg-216, Ser-235, and Gln-239 each coordinate 3-dehydroquinate.

The protein belongs to the type-I 3-dehydroquinase family. In terms of assembly, homodimer.

The catalysed reaction is 3-dehydroquinate = 3-dehydroshikimate + H2O. Its pathway is metabolic intermediate biosynthesis; chorismate biosynthesis; chorismate from D-erythrose 4-phosphate and phosphoenolpyruvate: step 3/7. Functionally, involved in the third step of the chorismate pathway, which leads to the biosynthesis of aromatic amino acids. Catalyzes the cis-dehydration of 3-dehydroquinate (DHQ) and introduces the first double bond of the aromatic ring to yield 3-dehydroshikimate. The protein is 3-dehydroquinate dehydratase of Geobacillus thermodenitrificans (strain NG80-2).